Consider the following 690-residue polypeptide: Serotransferrin (690 aa).

An N-terminal signal peptide occupies residues 1–17; sequence MKPLLLLTLLGCLAAAL. Transferrin-like domains follow at residues 24–329 and 340–670; these read VKWC…SLKK and IKWC…SLRK. Residues Cys-27 and Cys-49 are joined by a disulfide bond. Residues Asp-73 and Tyr-103 each coordinate Fe(3+). 3 disulfide bridges follow: Cys-126/Cys-206, Cys-171/Cys-185, and Cys-234/Cys-248. Residues Thr-128, Lys-132, Ala-134, and Gly-135 each contribute to the hydrogencarbonate site. Tyr-200 lines the Fe(3+) pocket. His-256 lines the Fe(3+) pocket. 2 cysteine pairs are disulfide-bonded: Cys-343-Cys-379 and Cys-353-Cys-370. Fe(3+) contacts are provided by Asp-394 and Tyr-429. 7 cysteine pairs are disulfide-bonded: Cys-404/Cys-682, Cys-419/Cys-643, Cys-452/Cys-530, Cys-476/Cys-671, Cys-486/Cys-499, Cys-496/Cys-513, and Cys-570/Cys-584. Hydrogencarbonate-binding residues include Thr-454, Arg-458, Ala-460, and Gly-461. Residue Tyr-524 participates in Fe(3+) binding. His-592 is a Fe(3+) binding site.

It belongs to the transferrin family. Monomer.

The protein localises to the secreted. Transferrins are iron binding transport proteins which can bind two Fe(3+) ions in association with the binding of an anion, usually bicarbonate. The sequence is that of Serotransferrin (tf) from Oryzias latipes (Japanese rice fish).